We begin with the raw amino-acid sequence, 260 residues long: Putative ATP-binding protein BAB2_1147 (260 aa).

In terms of domain architecture, ABC transporter spans 5 to 228 (ISFNNVVMRY…DLPYPRTEAI (224 aa)). 37–44 (GPSGCGKS) contributes to the ATP binding site.

The protein belongs to the ABC transporter superfamily. As to quaternary structure, the complex is composed of two ATP-binding proteins (BAB2_1147), two transmembrane proteins (BAB2_1148) and a solute-binding protein (BAB2_1146).

It is found in the cell inner membrane. Probably part of an ABC transporter complex. Probably Responsible for energy coupling to the transport system. This is Putative ATP-binding protein BAB2_1147 from Brucella abortus (strain 2308).